Here is an 88-residue protein sequence, read N- to C-terminus: Large ribosomal subunit protein bL27 (88 aa).

The interval 1 to 23 (MAHKKAGGSSRNGRDSAGRRLGV) is disordered.

The protein belongs to the bacterial ribosomal protein bL27 family.

The sequence is that of Large ribosomal subunit protein bL27 from Methylorubrum extorquens (strain CM4 / NCIMB 13688) (Methylobacterium extorquens).